A 378-amino-acid chain; its full sequence is Chaperone protein DnaJ 1 (378 aa).

Residues 4–68 (DYYGILGVDR…DKRRIVDMGG (65 aa)) enclose the J domain. The segment at 129 to 211 (GVKKDLTLDT…CAGDGRVRAR (83 aa)) adopts a CR-type zinc-finger fold. Zn(2+)-binding residues include C142, C145, C159, C162, C185, C188, C199, and C202. CXXCXGXG motif repeat units lie at residues 142 to 149 (CSKCHGSG), 159 to 166 (CGTCHGSG), 185 to 192 (CHTCNGTG), and 199 to 206 (CDECAGDG).

It belongs to the DnaJ family. In terms of assembly, homodimer. It depends on Zn(2+) as a cofactor.

It localises to the cytoplasm. Its function is as follows. Participates actively in the response to hyperosmotic and heat shock by preventing the aggregation of stress-denatured proteins and by disaggregating proteins, also in an autonomous, DnaK-independent fashion. Unfolded proteins bind initially to DnaJ; upon interaction with the DnaJ-bound protein, DnaK hydrolyzes its bound ATP, resulting in the formation of a stable complex. GrpE releases ADP from DnaK; ATP binding to DnaK triggers the release of the substrate protein, thus completing the reaction cycle. Several rounds of ATP-dependent interactions between DnaJ, DnaK and GrpE are required for fully efficient folding. Also involved, together with DnaK and GrpE, in the DNA replication of plasmids through activation of initiation proteins. In Corynebacterium efficiens (strain DSM 44549 / YS-314 / AJ 12310 / JCM 11189 / NBRC 100395), this protein is Chaperone protein DnaJ 1.